A 487-amino-acid chain; its full sequence is Fibroblast growth factor receptor-like 1 (487 aa).

Residues 1 to 18 (MGLQLALLLAGIVALSDS) form the signal peptide. At 19-371 (ARGPPRIADK…PSSVSSLPWP (353 aa)) the chain is on the extracellular side. Positions 23-109 (PRIADKVIHR…GSTNVNYTLI (87 aa)) constitute an Ig-like C2-type 1 domain. Residues Cys-45 and Cys-93 are joined by a disulfide bond. N-linked (GlcNAc...) asparagine glycosylation is present at Asn-105. Polar residues predominate over residues 115-125 (SSGKNSQTPEG). The tract at residues 115–147 (SSGKNSQTPEGSNGEYEDHSGKQWAQPRFTQPA) is disordered. Ig-like C2-type domains are found at residues 141–231 (PRFT…YKVE) and 240–348 (PILT…AFLT). Cys-166 and Cys-215 form a disulfide bridge. N-linked (GlcNAc...) asparagine glycans are attached at residues Asn-225, Asn-249, and Asn-287. The cysteines at positions 262 and 332 are disulfide-linked. A helical transmembrane segment spans residues 372–392 (VIIGIPAGAVFIFGTILLWLC). Topologically, residues 393–487 (QTKKKPCSPP…HQHQHIQYQC (95 aa)) are cytoplasmic.

As to quaternary structure, interacts with heparin and FGF2. In terms of tissue distribution, expressed in cartilaginous structures.

It localises to the cell membrane. Has a negative effect on cell proliferation. The chain is Fibroblast growth factor receptor-like 1 (FGFRL1) from Gallus gallus (Chicken).